A 199-amino-acid polypeptide reads, in one-letter code: Holliday junction branch migration complex subunit RuvA (199 aa).

A domain I region spans residues 1–65 (MIASLRGKLL…DRGQRLFGFG (65 aa)). Residues 66–144 (SKKDRESFEL…KFEMFLNEGT (79 aa)) form a domain II region. Residues 145-155 (TESSFVDRETD) are flexible linker. Residues 155-199 (DLATLALIQLGFDEKSATKQVADAKKLNPGLSASDIVKQVITGTR) form a domain III region.

Belongs to the RuvA family. In terms of assembly, homotetramer. Forms an RuvA(8)-RuvB(12)-Holliday junction (HJ) complex. HJ DNA is sandwiched between 2 RuvA tetramers; dsDNA enters through RuvA and exits via RuvB. An RuvB hexamer assembles on each DNA strand where it exits the tetramer. Each RuvB hexamer is contacted by two RuvA subunits (via domain III) on 2 adjacent RuvB subunits; this complex drives branch migration. In the full resolvosome a probable DNA-RuvA(4)-RuvB(12)-RuvC(2) complex forms which resolves the HJ.

The protein localises to the cytoplasm. In terms of biological role, the RuvA-RuvB-RuvC complex processes Holliday junction (HJ) DNA during genetic recombination and DNA repair, while the RuvA-RuvB complex plays an important role in the rescue of blocked DNA replication forks via replication fork reversal (RFR). RuvA specifically binds to HJ cruciform DNA, conferring on it an open structure. The RuvB hexamer acts as an ATP-dependent pump, pulling dsDNA into and through the RuvAB complex. HJ branch migration allows RuvC to scan DNA until it finds its consensus sequence, where it cleaves and resolves the cruciform DNA. In Leptospira biflexa serovar Patoc (strain Patoc 1 / Ames), this protein is Holliday junction branch migration complex subunit RuvA.